A 279-amino-acid polypeptide reads, in one-letter code: MTYADKIFKQNIQNILDNGVFSENARPKYKDGQTANSKYVTGSFVTYDLQKGEFPITTLRPIPIKSAIKELMWIYQDQTSELAILEEKYGVKYWGEWGIGDGTIGQRYGATVKKYNIIGKLLDGLAKNPWNRRNIINLWQYEDFEETEGLLPCAFQTMFDVRREQDGQIYLDATLIQRSNDMLVAHHINAMQYVALQMMIAKHFSWKVGKFFYFVNNLHIYDNQFEQANELVKRTASDKEPRLVLNVPDGTNFFDIKPEDFELVDYEPVKPQLKFDLAI.

A dUMP-binding site is contributed by 132–133; sequence RR. Catalysis depends on C153, which acts as the Nucleophile. Residues 178-181, N189, and 219-221 contribute to the dUMP site; these read RSND and HIY. D181 lines the (6R)-5,10-methylene-5,6,7,8-tetrahydrofolate pocket. A278 contributes to the (6R)-5,10-methylene-5,6,7,8-tetrahydrofolate binding site.

It belongs to the thymidylate synthase family. Bacterial-type ThyA subfamily. In terms of assembly, homodimer.

It localises to the cytoplasm. It catalyses the reaction dUMP + (6R)-5,10-methylene-5,6,7,8-tetrahydrofolate = 7,8-dihydrofolate + dTMP. It participates in pyrimidine metabolism; dTTP biosynthesis. Catalyzes the reductive methylation of 2'-deoxyuridine-5'-monophosphate (dUMP) to 2'-deoxythymidine-5'-monophosphate (dTMP) while utilizing 5,10-methylenetetrahydrofolate (mTHF) as the methyl donor and reductant in the reaction, yielding dihydrofolate (DHF) as a by-product. This enzymatic reaction provides an intracellular de novo source of dTMP, an essential precursor for DNA biosynthesis. This is Thymidylate synthase from Lactococcus lactis subsp. lactis (strain IL1403) (Streptococcus lactis).